Consider the following 549-residue polypeptide: Protein X92 (549 aa).

The protein is Protein X92 of Trypanosoma brucei brucei.